We begin with the raw amino-acid sequence, 196 residues long: Large ribosomal subunit protein eL15 (196 aa).

Basic residues predominate over residues 69–98 (RKGGSRKQRHKAGRRSKRQGVNRLSRRKSI). Disordered regions lie at residues 69–100 (RKGG…SIQR) and 161–196 (FRGL…RQGK). The span at 186-196 (PSVTGNDRQGK) shows a compositional bias: polar residues.

This sequence belongs to the eukaryotic ribosomal protein eL15 family.

The polypeptide is Large ribosomal subunit protein eL15 (Halorubrum lacusprofundi (strain ATCC 49239 / DSM 5036 / JCM 8891 / ACAM 34)).